The primary structure comprises 470 residues: Sorting nexin-17 (470 aa).

A PX domain is found at 1–109 (MHFSIPETES…SFLRRAQQET (109 aa)). A 1,2-diacyl-sn-glycero-3-phospho-(1D-myo-inositol-3-phosphate)-binding residues include Arg-36, Ser-38, Lys-62, and Arg-75. Residues 115 to 206 (EEVSLEVLLS…YKIVLRKSYW (92 aa)) form the Ras-associating domain. The interval 115–432 (EEVSLEVLLS…DATRESMVKL (318 aa)) is FERM-like. The interval 270-432 (GYLRFDACVA…DATRESMVKL (163 aa)) is PTB-like F3 module. A phosphoserine mark is found at Ser-336, Ser-407, Ser-409, Ser-415, Ser-421, Ser-437, and Ser-440. Residues 401-426 (GGTLRRSDSQQAVKSPPLLESPDATR) are disordered. Residues 458 to 470 (GNFAFEGIGDEDL) are interacts with the retriever complex.

Belongs to the sorting nexin family. Monomer. Interacts with APP (via cytoplasmic YXNPXY motif). Interacts with KIF1B. Interacts with the C-termini of P-selectin, PTC, LDLR, VLDLR, LRP1 and LRP8. Interacts with KRIT1 (via N-terminus). Interacts with HRAS. Interacts with ITGB1 and ITGB5 (via NPxY motif). Interacts with CCDC22 and CCDC93; the interaction associates SNX17 with the CCC complex. Interacts (via C-terminus) with VPS26C and VPS35L; the interactions are direct and associate SNX17 with the retriever complex.

Its subcellular location is the cytoplasm. The protein resides in the early endosome. It localises to the cytoplasmic vesicle membrane. Its function is as follows. Critical regulator of endosomal recycling of numerous surface proteins, including integrins, signaling receptor and channels. Binds to NPxY sequences in the cytoplasmic tails of target cargos. Associates with retriever and CCC complexes to prevent lysosomal degradation and promote cell surface recycling of numerous cargos such as integrins ITGB1, ITGB5 and their associated alpha subunits. Also required for maintenance of normal cell surface levels of APP and LRP1. Interacts with membranes containing phosphatidylinositol 3-phosphate (PtdIns(3P)). The polypeptide is Sorting nexin-17 (SNX17) (Homo sapiens (Human)).